A 252-amino-acid polypeptide reads, in one-letter code: Imidazole glycerol phosphate synthase subunit HisF (252 aa).

Active-site residues include aspartate 11 and aspartate 130.

It belongs to the HisA/HisF family. As to quaternary structure, heterodimer of HisH and HisF.

Its subcellular location is the cytoplasm. It carries out the reaction 5-[(5-phospho-1-deoxy-D-ribulos-1-ylimino)methylamino]-1-(5-phospho-beta-D-ribosyl)imidazole-4-carboxamide + L-glutamine = D-erythro-1-(imidazol-4-yl)glycerol 3-phosphate + 5-amino-1-(5-phospho-beta-D-ribosyl)imidazole-4-carboxamide + L-glutamate + H(+). The protein operates within amino-acid biosynthesis; L-histidine biosynthesis; L-histidine from 5-phospho-alpha-D-ribose 1-diphosphate: step 5/9. IGPS catalyzes the conversion of PRFAR and glutamine to IGP, AICAR and glutamate. The HisF subunit catalyzes the cyclization activity that produces IGP and AICAR from PRFAR using the ammonia provided by the HisH subunit. This Polynucleobacter asymbioticus (strain DSM 18221 / CIP 109841 / QLW-P1DMWA-1) (Polynucleobacter necessarius subsp. asymbioticus) protein is Imidazole glycerol phosphate synthase subunit HisF.